We begin with the raw amino-acid sequence, 135 residues long: Putative nickel-responsive regulator (135 aa).

His79, His90, His92, and Cys98 together coordinate Ni(2+).

Belongs to the transcriptional regulatory CopG/NikR family. It depends on Ni(2+) as a cofactor.

Its function is as follows. Transcriptional regulator. The protein is Putative nickel-responsive regulator of Dictyoglomus thermophilum (strain ATCC 35947 / DSM 3960 / H-6-12).